The sequence spans 238 residues: 3-dehydroquinate dehydratase (238 aa).

Residues 35 to 37 (ELR) and R70 contribute to the 3-dehydroquinate site. The active-site Proton donor/acceptor is H133. The Schiff-base intermediate with substrate role is filled by K160. R202 and Q225 together coordinate 3-dehydroquinate.

It belongs to the type-I 3-dehydroquinase family. As to quaternary structure, homodimer.

The enzyme catalyses 3-dehydroquinate = 3-dehydroshikimate + H2O. The protein operates within metabolic intermediate biosynthesis; chorismate biosynthesis; chorismate from D-erythrose 4-phosphate and phosphoenolpyruvate: step 3/7. Functionally, involved in the third step of the chorismate pathway, which leads to the biosynthesis of aromatic amino acids. Catalyzes the cis-dehydration of 3-dehydroquinate (DHQ) and introduces the first double bond of the aromatic ring to yield 3-dehydroshikimate. The sequence is that of 3-dehydroquinate dehydratase from Staphylococcus aureus (strain MSSA476).